We begin with the raw amino-acid sequence, 202 residues long: Snake venom metalloproteinase leucurolysin-A (202 aa).

Residue glutamine 1 is modified to Pyrrolidone carboxylic acid. A Peptidase M12B domain is found at 6–202 (RYIELVVVAD…HNPQCILNKP (197 aa)). The Ca(2+) site is built by glutamate 9 and aspartate 93. Cystine bridges form between cysteine 117-cysteine 197, cysteine 157-cysteine 181, and cysteine 159-cysteine 164. Histidine 142 lines the Zn(2+) pocket. Glutamate 143 is a catalytic residue. Residues histidine 146 and histidine 152 each contribute to the Zn(2+) site. Ca(2+) contacts are provided by cysteine 197 and asparagine 200.

The protein belongs to the venom metalloproteinase (M12B) family. P-I subfamily. Monomer. Zn(2+) is required as a cofactor. In terms of tissue distribution, expressed by the venom gland.

It localises to the secreted. With respect to regulation, inhibited by EDTA and 2-mercaptoethanol. Inhibited by 1 mM zinc ion and to a lesser extent by 1 mM calcium ion. Non-hemorrhagic metalloproteinase that hydrolyzes the alpha chains of fibrinogen, as well as fibrin, fibronectin and casein. Beta and gamma chains are also hydrolyzed, but more slowly. Thrombolytic activity is also observed. Induces detachment of endothelial cells followed by death, and inhibits endothelial cell adhesion to fibronectin. Induces edema in mouse paw. Inhibits ADP-induced platelet aggregation on human platelet-rich plasma with an IC(50) of 2.8 uM. This is Snake venom metalloproteinase leucurolysin-A from Bothrops leucurus (Whitetail lancehead).